A 225-amino-acid chain; its full sequence is Octanoyltransferase (225 aa).

The BPL/LPL catalytic domain occupies 43–225; the sequence is GTAPELVWLL…KTFRDVFGRG (183 aa). Residues 82–89, 157–159, and 170–172 contribute to the substrate site; these read RGGQYTYH, AIG, and GVS. C188 serves as the catalytic Acyl-thioester intermediate.

It belongs to the LipB family.

It localises to the cytoplasm. The catalysed reaction is octanoyl-[ACP] + L-lysyl-[protein] = N(6)-octanoyl-L-lysyl-[protein] + holo-[ACP] + H(+). It functions in the pathway protein modification; protein lipoylation via endogenous pathway; protein N(6)-(lipoyl)lysine from octanoyl-[acyl-carrier-protein]: step 1/2. Functionally, catalyzes the transfer of endogenously produced octanoic acid from octanoyl-acyl-carrier-protein onto the lipoyl domains of lipoate-dependent enzymes. Lipoyl-ACP can also act as a substrate although octanoyl-ACP is likely to be the physiological substrate. This Parvibaculum lavamentivorans (strain DS-1 / DSM 13023 / NCIMB 13966) protein is Octanoyltransferase.